Here is a 451-residue protein sequence, read N- to C-terminus: Subtilase-type proteinase psp3 (451 aa).

The N-terminal stretch at 1–20 (MRVSWISGLLLVAHLAPSSA) is a signal peptide. The 82-residue stretch at 80 to 161 (YIVMFKPSVD…LVEPDRVMHV (82 aa)) folds into the Inhibitor I9 domain. The Peptidase S8 domain occupies 169-451 (PWGLARVSHR…PNVLAFNNYE (283 aa)). Residues Asp-205, His-237, and Ser-394 each act as charge relay system in the active site.

It belongs to the peptidase S8 family.

In Schizosaccharomyces pombe (strain 972 / ATCC 24843) (Fission yeast), this protein is Subtilase-type proteinase psp3 (psp3).